We begin with the raw amino-acid sequence, 370 residues long: Accessory Sec system protein translocase subunit SecY2 (370 aa).

The next 9 helical transmembrane spans lie at 17-37 (IIFTCWILLIYIFGTHIPAIT), 65-85 (VFSLGLGPWLTAMIFMTLFYY), 105-125 (IFTLILALIQAYFVVFTLLSH), 134-154 (WLIILVLVTGAMILVWLSDLN), 155-175 (MRFGIAGPMPIVMISIIRSIM), 188-208 (LLISAALVLIIILLVLIFIEI), 240-260 (IAIMISFAAFFVLNSAVNLIV), 276-296 (FSTPIGITIFLILQLVLSYGI), and 339-359 (WIGAFIVTIIIGIPLYATLLI).

It belongs to the SecY/SEC61-alpha family. SecY2 subfamily. Component of the accessory SecA2/SecY2 protein translocase complex required to export cell wall proteins. May form heterotrimers with SecE and SecG subunits.

The protein localises to the cell membrane. Functionally, part of the accessory SecA2/SecY2 system specifically required for export of possible cell wall proteins. The central subunit of a protein translocation channel. This is Accessory Sec system protein translocase subunit SecY2 from Staphylococcus carnosus (strain TM300).